The following is a 459-amino-acid chain: Phosphomethylpyrimidine synthase (459 aa).

Substrate-binding positions include N81, M110, Y140, H176, 196-198 (SRG), 237-240 (DSLR), and E276. H280 is a binding site for Zn(2+). A substrate-binding site is contributed by Y303. Residue H344 participates in Zn(2+) binding. [4Fe-4S] cluster is bound by residues C424, C427, and C432.

It belongs to the ThiC family. [4Fe-4S] cluster is required as a cofactor.

It catalyses the reaction 5-amino-1-(5-phospho-beta-D-ribosyl)imidazole + S-adenosyl-L-methionine = 4-amino-2-methyl-5-(phosphooxymethyl)pyrimidine + CO + 5'-deoxyadenosine + formate + L-methionine + 3 H(+). The protein operates within cofactor biosynthesis; thiamine diphosphate biosynthesis. Its function is as follows. Catalyzes the synthesis of the hydroxymethylpyrimidine phosphate (HMP-P) moiety of thiamine from aminoimidazole ribotide (AIR) in a radical S-adenosyl-L-methionine (SAM)-dependent reaction. This Gloeobacter violaceus (strain ATCC 29082 / PCC 7421) protein is Phosphomethylpyrimidine synthase.